A 191-amino-acid chain; its full sequence is Chromobox protein homolog 5 (191 aa).

The segment at 1–21 is disordered; sequence MGKKTKRTADSSSSEDEEEYV. A phosphoserine mark is found at Ser11, Ser12, Ser13, and Ser14. The 59-residue stretch at 20–78 folds into the Chromo 1 domain; it reads YVVEKVLDRRMVKGQVEYLLKWKGFSEEHNTWEPEKNLDCPELISEFMKKYKKMKEGEN. A Glycyl lysine isopeptide (Lys-Gly) (interchain with G-Cter in SUMO2) cross-link involves residue Lys32. An N6-acetyllysine modification is found at Lys40. Positions 70–117 are disordered; sequence YKKMKEGENNKPREKSEGNKRKSSFSNSADDIKSKKKREQSNDIARGF. The segment covering 73 to 89 has biased composition (basic and acidic residues); sequence MKEGENNKPREKSEGNK. Residue Lys91 forms a Glycyl lysine isopeptide (Lys-Gly) (interchain with G-Cter in SUMO2) linkage. Phosphoserine is present on residues Ser92, Ser93, Ser95, and Ser97. Glycyl lysine isopeptide (Lys-Gly) (interchain with G-Cter in SUMO2) cross-links involve residues Lys102, Lys106, Lys154, and Lys184. One can recognise a Chromo 2; shadow subtype domain in the interval 121–179; that stretch reads LEPEKIIGATDSCGDLMFLMKWKDTDEADLVLAKEANVKCPQIVIAFYEERLTWHAYPE.

Homodimer. Interacts with histone H3 methylated at 'Lys-9'. Interacts (via Chromo 2; shadow subtype domain) with the MIS12 complex subunit NSL1; the interaction is direct, involves dimeric CBX5, and occurs during interphase. Interacts with POGZ; POGZ and PXVXL motif-containing proteins such as INCENP and TRIM28 compete for interaction with CBX5. Interacts with LRIF1 (via PxVxL motif). Interacts with INCENP. Interacts with TRIM24. Interacts (via the chromoshadow domain) with ATRX; the interaction is direct. Interacts (via the chromoshadow domain) with CHAF1A; the interaction is direct. Interacts (via the chromoshadow domain) with LBR; the interaction is direct. Interacts (via the chromoshadow domain) with NIPBL; the interaction is direct. Interacts (via the chromoshadow domain) with SP100; the interaction is direct. Interacts (via the chromoshadow domain) with STAM2; the interaction is direct. Interacts (via the chromoshadow domain) with TRIM28; the interaction is direct. Interacts (via the chromoshadow domain) with CBX3; the interaction is direct. Interacts with PRR14 (via N-terminus). Interacts with RRP1B. Interacts with HNRNPU (via C-terminus); this interaction is, at least in part, RNA-dependent. Interacts with ZNF263; recruited to the SIX3 promoter along with other proteins involved in chromatin modification and transcriptional corepression where it contributes to transcriptional repression. Interacts with AURKB during mitosis. Interacts with CHAMP1. Interacts with BAHD1. Interacts with HP1BP3. Interacts with CHD3. Interacts with CHD4. Interacts with SMYD5. Interacts with KMT5B. Interacts with KMT5C. Post-translationally, phosphorylation of HP1 and LBR may be responsible for some of the alterations in chromatin organization and nuclear structure which occur at various times during the cell cycle. Phosphorylated during interphase and possibly hyper-phosphorylated during mitosis. Ubiquitinated.

It is found in the nucleus. The protein resides in the chromosome. It localises to the centromere. Its function is as follows. Component of heterochromatin that recognizes and binds histone H3 tails methylated at 'Lys-9' (H3K9me), leading to epigenetic repression. In contrast, it is excluded from chromatin when 'Tyr-41' of histone H3 is phosphorylated (H3Y41ph). May contribute to the association of heterochromatin with the inner nuclear membrane by interactions with the lamin-B receptor (LBR). Involved in the formation of kinetochore through interaction with the MIS12 complex subunit NSL1. Required for the formation of the inner centromere. Component of heterochromatin that recognizes and binds histone H3 tails methylated at 'Lys-9' (H3K9me), leading to epigenetic repression. In contrast, it is excluded from chromatin when 'Tyr-41' of histone H3 is phosphorylated (H3Y41ph). Can interact with lamin-B receptor (LBR). This interaction can contribute to the association of the heterochromatin with the inner nuclear membrane. Involved in the formation of functional kinetochore through interaction with MIS12 complex proteins. This is Chromobox protein homolog 5 (Cbx5) from Mus musculus (Mouse).